A 462-amino-acid chain; its full sequence is NAD-capped RNA hydrolase NUDT12 (462 aa).

The residue at position 10 (K10) is an N6-succinyllysine. 3 ANK repeats span residues 11 to 40 (EMIS…SLLN), 45 to 74 (NGWT…DRSL), and 78 to 98 (ARQT…ANLL). K185 is modified (N6-succinyllysine). Residues C284 and C287 each coordinate Zn(2+). K292 is modified (N6-succinyllysine). Residues C302 and C307 each coordinate Zn(2+). Residues Y318, 354–356 (AGF), E370, E374, and E415 each bind substrate. A Nudix hydrolase domain is found at 319 to 453 (PRVDPVVIMQ…SRAIAHQLIK (135 aa)). The Mg(2+) site is built by A354, E370, E374, and E415. Residues 355–376 (GFIEPGETIEDAVRREVEEESG) carry the Nudix box motif. Positions 460–462 (PNL) match the Microbody targeting signal motif.

It belongs to the Nudix hydrolase family. NudC subfamily. In terms of assembly, homodimer. Homodimerization is essential for its catalytic activity and protein stability. Interacts (via ANK repeats) with BLMH. Requires Mg(2+) as cofactor. The cofactor is Zn(2+). In terms of tissue distribution, expressed abundantly in the liver and kidney.

The protein resides in the cytoplasm. It is found in the peroxisome. Its subcellular location is the cytoplasmic granule. The enzyme catalyses a 5'-end NAD(+)-phospho-ribonucleoside in mRNA + H2O = a 5'-end phospho-adenosine-phospho-ribonucleoside in mRNA + beta-nicotinamide D-ribonucleotide + 2 H(+). It catalyses the reaction NAD(+) + H2O = beta-nicotinamide D-ribonucleotide + AMP + 2 H(+). The catalysed reaction is NADH + H2O = reduced beta-nicotinamide D-ribonucleotide + AMP + 2 H(+). It carries out the reaction NADPH + H2O = reduced beta-nicotinamide D-ribonucleotide + adenosine 2',5'-bisphosphate + 2 H(+). Functionally, mRNA decapping enzyme that specifically removes the nicotinamide adenine dinucleotide (NAD) cap from a subset of mRNAs by hydrolyzing the diphosphate linkage to produce nicotinamide mononucleotide (NMN) and 5' monophosphate mRNA. The NAD-cap is present at the 5'-end of some RNAs; in contrast to the canonical N7 methylguanosine (m7G) cap, the NAD cap promotes mRNA decay. Preferentially acts on NAD-capped transcripts in response to nutrient stress. Also acts on free nicotinamide adenine dinucleotide molecules: hydrolyzes NAD(H) into NMN(H) and AMP, and NADPH into NMNH and 2',5'-ADP. May act to regulate the concentration of peroxisomal nicotinamide nucleotide cofactors required for oxidative metabolism in this organelle. Regulates the levels of circadian clock components PER1, PER2, PER3 and CRY2 in the liver. This chain is NAD-capped RNA hydrolase NUDT12, found in Mus musculus (Mouse).